A 739-amino-acid chain; its full sequence is Catalase-peroxidase (739 aa).

The first 23 residues, 1 to 23 (MLKKIVTALGMSGMLLASNSAIA), serve as a signal peptide directing secretion. A cross-link (tryptophyl-tyrosyl-methioninium (Trp-Tyr) (with M-247)) is located at residues 100–221 (WHDAGTYRIY…YAATQMGLIY (122 aa)). H101 functions as the Proton acceptor in the catalytic mechanism. Positions 221-247 (YVNPEGPDGKPDIKGAASEIRQAFRAM) form a cross-link, tryptophyl-tyrosyl-methioninium (Tyr-Met) (with W-100). H262 provides a ligand contact to heme b.

Belongs to the peroxidase family. Peroxidase/catalase subfamily. Homodimer or homotetramer. The cofactor is heme b. In terms of processing, formation of the three residue Trp-Tyr-Met cross-link is important for the catalase, but not the peroxidase activity of the enzyme.

It carries out the reaction H2O2 + AH2 = A + 2 H2O. It catalyses the reaction 2 H2O2 = O2 + 2 H2O. Bifunctional enzyme with both catalase and broad-spectrum peroxidase activity. This is Catalase-peroxidase from Francisella tularensis subsp. novicida (strain U112).